Reading from the N-terminus, the 155-residue chain is 6,7-dimethyl-8-ribityllumazine synthase (155 aa).

5-amino-6-(D-ribitylamino)uracil-binding positions include F24, 58–60 (AFE), and 82–84 (AII). 87–88 (ST) lines the (2S)-2-hydroxy-3-oxobutyl phosphate pocket. H90 functions as the Proton donor in the catalytic mechanism. Residue F115 participates in 5-amino-6-(D-ribitylamino)uracil binding. R129 is a binding site for (2S)-2-hydroxy-3-oxobutyl phosphate.

It belongs to the DMRL synthase family.

It carries out the reaction (2S)-2-hydroxy-3-oxobutyl phosphate + 5-amino-6-(D-ribitylamino)uracil = 6,7-dimethyl-8-(1-D-ribityl)lumazine + phosphate + 2 H2O + H(+). It participates in cofactor biosynthesis; riboflavin biosynthesis; riboflavin from 2-hydroxy-3-oxobutyl phosphate and 5-amino-6-(D-ribitylamino)uracil: step 1/2. Catalyzes the formation of 6,7-dimethyl-8-ribityllumazine by condensation of 5-amino-6-(D-ribitylamino)uracil with 3,4-dihydroxy-2-butanone 4-phosphate. This is the penultimate step in the biosynthesis of riboflavin. This chain is 6,7-dimethyl-8-ribityllumazine synthase, found in Chlorobium phaeobacteroides (strain BS1).